We begin with the raw amino-acid sequence, 299 residues long: tRNA dimethylallyltransferase (299 aa).

Gly10 to Ser17 contributes to the ATP binding site. Thr12–Ser17 contacts substrate. The segment at Asp35–Gln38 is interaction with substrate tRNA.

Belongs to the IPP transferase family. Monomer. Requires Mg(2+) as cofactor.

The enzyme catalyses adenosine(37) in tRNA + dimethylallyl diphosphate = N(6)-dimethylallyladenosine(37) in tRNA + diphosphate. Functionally, catalyzes the transfer of a dimethylallyl group onto the adenine at position 37 in tRNAs that read codons beginning with uridine, leading to the formation of N6-(dimethylallyl)adenosine (i(6)A). The sequence is that of tRNA dimethylallyltransferase from Rippkaea orientalis (strain PCC 8801 / RF-1) (Cyanothece sp. (strain PCC 8801)).